Reading from the N-terminus, the 94-residue chain is Small ribosomal subunit protein uS19 (94 aa).

Residues 75–94 (SHTRTFKGHAGDKKAAGSKR) form a disordered region. A compositionally biased stretch (basic and acidic residues) spans 83–94 (HAGDKKAAGSKR).

This sequence belongs to the universal ribosomal protein uS19 family.

Its function is as follows. Protein S19 forms a complex with S13 that binds strongly to the 16S ribosomal RNA. The chain is Small ribosomal subunit protein uS19 from Nitrosomonas europaea (strain ATCC 19718 / CIP 103999 / KCTC 2705 / NBRC 14298).